A 372-amino-acid chain; its full sequence is tRNA-specific 2-thiouridylase MnmA (372 aa).

ATP-binding positions include 16–23 (GMSGGVDS) and Met-42. The tract at residues 102 to 104 (NPD) is interaction with target base in tRNA. Cys-107 serves as the catalytic Nucleophile. A disulfide bridge links Cys-107 with Cys-205. Gly-132 is a binding site for ATP. Residues 155–157 (KDQ) are interaction with tRNA. Residue Cys-205 is the Cysteine persulfide intermediate of the active site. The tract at residues 317–318 (RY) is interaction with tRNA.

This sequence belongs to the MnmA/TRMU family.

Its subcellular location is the cytoplasm. The catalysed reaction is S-sulfanyl-L-cysteinyl-[protein] + uridine(34) in tRNA + AH2 + ATP = 2-thiouridine(34) in tRNA + L-cysteinyl-[protein] + A + AMP + diphosphate + H(+). In terms of biological role, catalyzes the 2-thiolation of uridine at the wobble position (U34) of tRNA, leading to the formation of s(2)U34. The sequence is that of tRNA-specific 2-thiouridylase MnmA from Shewanella frigidimarina (strain NCIMB 400).